A 314-amino-acid polypeptide reads, in one-letter code: RNA 2'-O-methyltransferase FBLL1 (314 aa).

The span at 1 to 59 (MKPAGGRGGWGWGGGKGGSKGGDTGSGTKGGFGARTRGSSGGGRGRGRGGGGGGGGGGG) shows a compositional bias: gly residues. The interval 1–82 (MKPAGGRGGW…RRKKGITVSV (82 aa)) is disordered. Arginine 7 bears the Omega-N-methylarginine mark. Basic residues predominate over residues 64–77 (RGGPGKNKNRRKKG). Residues 166–167 (TT), 185–186 (EF), 210–211 (DA), and 230–233 (DVAQ) contribute to the S-adenosyl-L-methionine site.

Belongs to the methyltransferase superfamily. Fibrillarin family. In terms of assembly, component of a box C/D small nucleolar ribonucleoprotein (snoRNP) complex composed of FBLL1, SNU13/NHP2L1, NOP56 and NOP58 and a guide snoRNA which mediates 2'-hydroxyl ribose methylation in RNAs.

It is found in the nucleus. The protein resides in the nucleolus. It catalyses the reaction a ribonucleotide in RNA + S-adenosyl-L-methionine = a 2'-O-methylribonucleotide in RNA + S-adenosyl-L-homocysteine + H(+). In terms of biological role, S-adenosyl-L-methionine-dependent RNA methyltransferase that catalyzes 2'-hydroxyl ribose methylation in RNAs. Functions as part of box C/D small nucleolar ribonucleoprotein (snoRNP) complexes, where guide snoRNAs ensure methylation specificity through base pairing with RNA substrates. Exhibits broad substrate specificity, methylating multiple sites on ribosomal RNAs (rRNAs) and messenger RNAs (mRNAs) depending on the guide snoRNA incorporated in the complex. Specifically expressed in brain, it regulates the expression of GAP43 by stabilizing its mRNA through methylation and thereby plays an indirect role in neuronal differentiation. This is RNA 2'-O-methyltransferase FBLL1 from Mus musculus (Mouse).